Here is a 310-residue protein sequence, read N- to C-terminus: Malate dehydrogenase (310 aa).

NAD(+)-binding positions include 7–12 (GAGHVG) and aspartate 32. Arginine 81 and arginine 87 together coordinate substrate. NAD(+)-binding positions include asparagine 94 and 117-119 (VSN). Substrate contacts are provided by asparagine 119 and arginine 150. The active-site Proton acceptor is histidine 174.

Belongs to the LDH/MDH superfamily. MDH type 3 family.

It catalyses the reaction (S)-malate + NAD(+) = oxaloacetate + NADH + H(+). Its function is as follows. Catalyzes the reversible oxidation of malate to oxaloacetate. This chain is Malate dehydrogenase, found in Chlorobium phaeobacteroides (strain BS1).